The sequence spans 424 residues: CinA-like protein (424 aa).

The protein belongs to the CinA family.

In Shewanella putrefaciens (strain CN-32 / ATCC BAA-453), this protein is CinA-like protein.